Here is a 303-residue protein sequence, read N- to C-terminus: Tobamovirus multiplication protein 3 (303 aa).

Topologically, residues 1-48 (MRIGGVEVTKFASEMMSSSSSSAVEMLNLKEASNWWSDVNESPIWQDR) are extracellular. Residues 49–69 (IFHVLAVLYGIVSLVAVIQLV) form a helical membrane-spanning segment. Over 70-82 (RIQLRVPEYGWTT) the chain is Cytoplasmic. Residues 83–103 (QKVFHFLNFVVNGVRAVVFVF) traverse the membrane as a helical segment. Residues 104–117 (RRNVQFMQPEILQH) are Extracellular-facing. The chain crosses the membrane as a helical span at residues 118–138 (ILLDIPSLAFFTTYALLVLFW). At 139 to 156 (AEIYYQARAVSTDGLRPS) the chain is on the cytoplasmic side. A helical membrane pass occupies residues 157-177 (FFTINAVVYVVQIALWLVLWW). Residues 178–183 (KPVRVM) are Extracellular-facing. A helical membrane pass occupies residues 184–204 (VILSKMFFAGVSLFAALGFLL). The Cytoplasmic portion of the chain corresponds to 205–232 (YGGRLFLMLQRFPVESKGRRKKLQEVGY). A helical membrane pass occupies residues 233 to 253 (VTTICFTCFLIRCIMMCFAAF). At 254–265 (DEGANLDVLDHP) the chain is on the extracellular side. Residues 266 to 286 (ILNFIYYLLVEILPSSLVLFI) traverse the membrane as a helical segment. Over 287–303 (LRKLPPKRGITQYHQIR) the chain is Cytoplasmic.

It belongs to the plant tobamovirus multiplication TOM1 protein family. As to quaternary structure, constituent of tobamovirus replication complex. Interacts with the helicase domain of tobamovirus-encoded replication proteins.

The protein localises to the vacuole membrane. In terms of biological role, contributes to the intracellular multiplication of tobamoviruses, probably being a membrane anchor promoting the formation of the replication complex. The polypeptide is Tobamovirus multiplication protein 3 (TOM3) (Arabidopsis thaliana (Mouse-ear cress)).